A 555-amino-acid chain; its full sequence is Connector enhancer of kinase suppressor of ras 3 (555 aa).

Residues 7-72 (WSPKQVVDWT…LEAVDLLCAL (66 aa)) form the SAM domain. The 95-residue stretch at 80–174 (NMKNLVLKLR…TAVQKDCLVA (95 aa)) folds into the CRIC domain. In terms of domain architecture, PDZ spans 211–293 (EVHLPNVRPG…GVVLLLKKRP (83 aa)). Disordered stretches follow at residues 308–333 (RWKP…MDAS), 348–391 (PPPA…LDQE), and 518–538 (PFQE…ASSG). Low complexity predominate over residues 311–329 (PPLVQTSPPPTTTQSPEST). The 222-residue stretch at 325–546 (SPESTMDASL…SGEPSLLVSW (222 aa)) folds into the DUF1170 domain. Phosphoserine occurs at positions 381 and 383.

The protein belongs to the CNKSR family. Interacts with epithelial sodium channel ENaC. Interacts directly with SCNN1A (ENaC subunit alpha) and SCNN1B (ENaC subunit beta) C-terminal tails. Interacts with ENaC regulatory proteins NEDD4L, RAF1 and SGK1.

It is found in the cytoplasm. The protein resides in the apical cell membrane. Involved in transepithelial sodium transport. Regulates aldosterone-induced and epithelial sodium channel (ENaC)-mediated sodium transport through regulation of ENaC cell surface expression. Acts as a scaffold protein coordinating the assembly of an ENaC-regulatory complex (ERC). This Rattus norvegicus (Rat) protein is Connector enhancer of kinase suppressor of ras 3 (Cnksr3).